The primary structure comprises 178 residues: SsrA-binding protein (178 aa).

The disordered stretch occupies residues 1–28 (MAKKSTPVDSGRSKGKKASAPRGGGPAV).

Belongs to the SmpB family.

The protein resides in the cytoplasm. In terms of biological role, required for rescue of stalled ribosomes mediated by trans-translation. Binds to transfer-messenger RNA (tmRNA), required for stable association of tmRNA with ribosomes. tmRNA and SmpB together mimic tRNA shape, replacing the anticodon stem-loop with SmpB. tmRNA is encoded by the ssrA gene; the 2 termini fold to resemble tRNA(Ala) and it encodes a 'tag peptide', a short internal open reading frame. During trans-translation Ala-aminoacylated tmRNA acts like a tRNA, entering the A-site of stalled ribosomes, displacing the stalled mRNA. The ribosome then switches to translate the ORF on the tmRNA; the nascent peptide is terminated with the 'tag peptide' encoded by the tmRNA and targeted for degradation. The ribosome is freed to recommence translation, which seems to be the essential function of trans-translation. The polypeptide is SsrA-binding protein (Corynebacterium urealyticum (strain ATCC 43042 / DSM 7109)).